The chain runs to 153 residues: MAKLTILIALVAALVLVVHTSAFQSSKQSCKRQLQQVNLRHCENHIAQRIQQQQEEEEDHALKLRGIKHVILRHRSSQEYSEESEELDQCCEQLNELNSQRCQCRALQQIYESQSEQCEGSQQEQQLEQELEKLPRTCGFGPLRRCDVNPDEE.

A signal peptide spans 1-22 (MAKLTILIALVAALVLVVHTSA). 4 disulfides stabilise this stretch: cysteine 30/cysteine 102, cysteine 42/cysteine 90, cysteine 91/cysteine 138, and cysteine 104/cysteine 146.

It belongs to the 2S seed storage albumins family. As to quaternary structure, heterodimer of a small chain and a large chain; disulfide-linked. As to expression, expressed in developing cotyledons (at protein level).

The protein resides in the endoplasmic reticulum. This chain is Conglutin delta 2, found in Lupinus angustifolius (Narrow-leaved blue lupine).